The primary structure comprises 524 residues: MLTCNKAGSGMVVDAASSNGPFQPVALLHIRDVPPADQEKLFIQKLRQCCVLFDFVSDPLSDLKWKEVKRAALSEMVEYITHNRNVITEPIYPEAVHMFAVNMFRTLPPSSNPTGAEFDPEEDEPTLEAAWPHLQLVYEFFLRFLESPDFQPNIAKKYIDQKFVLQLLELFDSEDPRERDFLKTTLHRIYGKFLGLRAYIRKQINNIFYRFIYETEHHNGIAELLEILGSIINGFALPLKEEHKIFLLKVLLPLHKVKSLSVYHPQLAYCVVQFLEKDSTLTEPVVMALLKYWPKTHSPKEVMFLNELEEILDVIEPSEFVKIMEPLFRQLAKCVSSPHFQVAERALYYWNNEYIMSLISDNAAKILPIMFPSLYRNSKTHWNKTIHGLIYNALKLFMEMNQKLFDDCTQQFKAEKLKEKLKMKEREEAWVKIENLAKANPQYAVYSQASAVSIPVAMETDGPQFEDVQMLKKTVSDEARQAQKELKKDRPLVRRKSELPQDPHTEKALEAHCRASELLSQDGR.

Methionine 1 is modified (N-acetylmethionine). A disordered region spans residues 476–508; the sequence is SDEARQAQKELKKDRPLVRRKSELPQDPHTEKA.

Belongs to the phosphatase 2A regulatory subunit B56 family. In terms of assembly, PP2A consists of a common heterodimeric core enzyme, composed of PPP2CA a 36 kDa catalytic subunit (subunit C) and PPP2R1A a 65 kDa constant regulatory subunit (PR65 or subunit A), that associates with a variety of regulatory subunits. Proteins that associate with the core dimer include three families of regulatory subunits B (the R2/B/PR55/B55, R3/B''/PR72/PR130/PR59 and R5/B'/B56 families), the 48 kDa variable regulatory subunit, viral proteins, and cell signaling molecules. Interacts with SGO1. Interacts with SGO1; the interaction is direct. May interact with TP53. Interacts with IER3 and/or ERK kinases; regulates ERK dephosphorylation. Interacts with CIP2A; this interaction stabilizes CIP2A. In terms of tissue distribution, highest levels in heart, liver and brain. Lower levels in skeletal muscle, spleen, kidney and lung. Isoform 4 is testis-specific.

The protein localises to the nucleus. The protein resides in the chromosome. Its subcellular location is the centromere. In terms of biological role, the B regulatory subunit might modulate substrate selectivity and catalytic activity, and might also direct the localization of the catalytic enzyme to a particular subcellular compartment. The PP2A-PPP2R5C holoenzyme may activate TP53 and play a role in DNA damage-induced inhibition of cell proliferation. PP2A-PPP2R5C may also regulate the ERK signaling pathway through ERK dephosphorylation. The protein is Serine/threonine-protein phosphatase 2A 56 kDa regulatory subunit gamma isoform (Ppp2r5c) of Mus musculus (Mouse).